A 539-amino-acid chain; its full sequence is Glucans biosynthesis protein D (539 aa).

Residues 1–29 (MNRRNLLKASMALAAYGSVSASGLYAARA) constitute a signal peptide (tat-type signal).

Belongs to the OpgD/OpgG family. Predicted to be exported by the Tat system. The position of the signal peptide cleavage has not been experimentally proven.

The protein resides in the periplasm. The protein operates within glycan metabolism; osmoregulated periplasmic glucan (OPG) biosynthesis. Probably involved in the control of the structural glucose backbone of osmoregulated periplasmic glucans (OPGs). The chain is Glucans biosynthesis protein D from Pseudomonas savastanoi pv. phaseolicola (strain 1448A / Race 6) (Pseudomonas syringae pv. phaseolicola (strain 1448A / Race 6)).